Here is a 72-residue protein sequence, read N- to C-terminus: Sec-independent protein translocase protein TatA (72 aa).

A helical transmembrane segment spans residues 1–21 (MAGLSIWHVVIFAIVVILLFG). A disordered region spans residues 47-72 (DEAASLNSPRTIDAQVKTSESTSVKS). The segment covering 51–72 (SLNSPRTIDAQVKTSESTSVKS) has biased composition (polar residues).

This sequence belongs to the TatA/E family. The Tat system comprises two distinct complexes: a TatABC complex, containing multiple copies of TatA, TatB and TatC subunits, and a separate TatA complex, containing only TatA subunits. Substrates initially bind to the TatABC complex, which probably triggers association of the separate TatA complex to form the active translocon.

It is found in the cell inner membrane. Functionally, part of the twin-arginine translocation (Tat) system that transports large folded proteins containing a characteristic twin-arginine motif in their signal peptide across membranes. TatA could form the protein-conducting channel of the Tat system. The polypeptide is Sec-independent protein translocase protein TatA (Acinetobacter baumannii (strain AB307-0294)).